The chain runs to 260 residues: Triosephosphate isomerase (260 aa).

11–13 lines the substrate pocket; it reads NWK. His-103 functions as the Electrophile in the catalytic mechanism. The active-site Proton acceptor is Glu-175. Residues Gly-181, Ser-220, and 241–242 contribute to the substrate site; that span reads GG.

It belongs to the triosephosphate isomerase family. Homodimer.

It localises to the cytoplasm. It carries out the reaction D-glyceraldehyde 3-phosphate = dihydroxyacetone phosphate. It participates in carbohydrate biosynthesis; gluconeogenesis. The protein operates within carbohydrate degradation; glycolysis; D-glyceraldehyde 3-phosphate from glycerone phosphate: step 1/1. Its function is as follows. Involved in the gluconeogenesis. Catalyzes stereospecifically the conversion of dihydroxyacetone phosphate (DHAP) to D-glyceraldehyde-3-phosphate (G3P). This chain is Triosephosphate isomerase, found in Shewanella sediminis (strain HAW-EB3).